The chain runs to 147 residues: Large ribosomal subunit protein bL9 (147 aa).

It belongs to the bacterial ribosomal protein bL9 family.

Its function is as follows. Binds to the 23S rRNA. The chain is Large ribosomal subunit protein bL9 from Natranaerobius thermophilus (strain ATCC BAA-1301 / DSM 18059 / JW/NM-WN-LF).